We begin with the raw amino-acid sequence, 1591 residues long: Rho guanine nucleotide exchange factor TIAM1 (1591 aa).

The segment at 1–78 is disordered; that stretch reads MGNAESQHVE…AENGLEPFSQ (78 aa). G2 is lipidated: N-myristoyl glycine. Basic and acidic residues predominate over residues 7–19; sequence QHVEHEFYGEKHA. Basic residues predominate over residues 20–49; that stretch reads SLGRKHTSRSLRLSHKTRRTRHASSGKVIH. Residues 53–67 are compositionally biased toward low complexity; that stretch reads EVSTRSSSTPSIPQS. S231 is subject to Phosphoserine. Disordered regions lie at residues 298-379 and 393-422; these read SEGA…GDAA and MSTTNSESLEEAGSAHSDEQSSGTLSSPGQ. Composition is skewed to polar residues over residues 300–313 and 340–361; these read GATNPQISHSNSMQ and TTDTDLLSRRSNATNSSYSPTT. Phosphoserine is present on residues S356 and S358. Positions 367-377 are enriched in low complexity; that stretch reads GSDSGSSSTGD. Polar residues predominate over residues 412–422; that stretch reads QSSGTLSSPGQ. The 116-residue stretch at 434-549 folds into the PH 1 domain; it reads VRKAGALAVK…TAIHSACATA (116 aa). Phosphoserine is present on S695. Residues 765-832 enclose the RBD domain; sequence TPSWFCLPNN…QPEEDIYELL (68 aa). Phosphotyrosine; by NTRK2 is present on Y829. In terms of domain architecture, PDZ spans 845 to 908; sequence SIHIEKSDTA…NNRAADALNS (64 aa). Positions 939 to 1034 are disordered; that stretch reads SPPHRVDGPA…TGPQLATMRQ (96 aa). The span at 958–975 shows a compositional bias: polar residues; it reads LTSNPGHSLCSEQGSSAE. The segment covering 977 to 990 has biased composition (acidic residues); the sequence is APEETEGPDLESSD. The span at 1014-1024 shows a compositional bias: low complexity; that stretch reads PSDQSPSPQDS. A compositionally biased stretch (polar residues) spans 1025–1034; that stretch reads TGPQLATMRQ. The DH domain maps to 1040–1234; it reads KLRKVICELL…NKVASHINEM (195 aa). Positions 1261-1397 constitute a PH 2 domain; that stretch reads DLSMGDLLLH…KAVHSILRDK (137 aa). Phosphotyrosine is present on Y1323. Glycyl lysine isopeptide (Lys-Gly) (interchain with G-Cter in ubiquitin) cross-links involve residues K1404 and K1420. The segment at 1456–1482 is disordered; that stretch reads TIDSDAVSASSPEKESQQPPGGGDTDR. S1519 is subject to Phosphoserine.

Belongs to the TIAM family. In terms of assembly, component of the Par polarity complex, composed of at least phosphorylated PRKCZ, PARD3 and TIAM1. Interacts with NTRK2; mediates the activation of RAC1 by BDNF. Interacts with MAPK8IP2 and CD44. Interacts with BAIAP2. Interacts with EPHA8; regulates clathrin-mediated endocytosis of EPHA8. Interacts with PARD3. Interacts (via PDZ domain) with CNTNAP4, SDC1 and SDC3 (via C-terminus). Ubiquitinated. Undergoes 'Lys-48' ubiquitination at Lys-1404 and Lys-1420 by a CUL3(KBTBD6/7) E3 ubiquitin ligase complex composed of CUL3, RBX1, KBTBD6 and KBTBD7. 'Lys-48' ubiquitination at Lys-1404 and Lys-1420 triggers proteasomal degradation. Ubiquitination at Lys-1404 and Lys-1420 by CUL3(KBTBD6/7) also requires the membrane-associated protein GABARAP and may therefore be spatially restricted within the cell. As to expression, found in virtually all analyzed tumor cell lines including B- and T-lymphomas, neuroblastomas, melanomas and carcinomas.

It localises to the cell junction. The protein localises to the cell membrane. Functionally, guanyl-nucleotide exchange factor that activates RHO-like proteins and connects extracellular signals to cytoskeletal activities. Activates RAC1, CDC42, and to a lesser extent RHOA and their downstream signaling to regulate processes like cell adhesion and cell migration. The polypeptide is Rho guanine nucleotide exchange factor TIAM1 (Homo sapiens (Human)).